The following is a 207-amino-acid chain: Outer-membrane lipoprotein LolB (207 aa).

The first 21 residues, 1–21 (MTLPDFRLIRLLPLASLVLTA), serve as a signal peptide directing secretion. The N-palmitoyl cysteine moiety is linked to residue C22. C22 carries S-diacylglycerol cysteine lipidation.

This sequence belongs to the LolB family. In terms of assembly, monomer.

The protein resides in the cell outer membrane. In terms of biological role, plays a critical role in the incorporation of lipoproteins in the outer membrane after they are released by the LolA protein. The protein is Outer-membrane lipoprotein LolB of Salmonella agona (strain SL483).